Reading from the N-terminus, the 356-residue chain is Dihydroorotate dehydrogenase (quinone) (356 aa).

Residues Ala-66–Lys-70 and Thr-90 each bind FMN. Position 70 (Lys-70) interacts with substrate. Asn-115–Phe-119 lines the substrate pocket. FMN is bound by residues Asn-143 and Asn-176. Asn-176 is a substrate binding site. Ser-179 serves as the catalytic Nucleophile. Asn-181 contacts substrate. 2 residues coordinate FMN: Lys-212 and Thr-240. Asn-241–Thr-242 lines the substrate pocket. FMN is bound by residues Gly-266, Gly-295, and Tyr-316–Thr-317.

It belongs to the dihydroorotate dehydrogenase family. Type 2 subfamily. In terms of assembly, monomer. FMN is required as a cofactor.

The protein resides in the cell membrane. The enzyme catalyses (S)-dihydroorotate + a quinone = orotate + a quinol. Its pathway is pyrimidine metabolism; UMP biosynthesis via de novo pathway; orotate from (S)-dihydroorotate (quinone route): step 1/1. In terms of biological role, catalyzes the conversion of dihydroorotate to orotate with quinone as electron acceptor. The chain is Dihydroorotate dehydrogenase (quinone) from Rhodococcus opacus (strain B4).